A 151-amino-acid chain; its full sequence is Protein SprT-like (151 aa).

Residues 6–147 (LQRMVENLSE…GHCNGKLRMK (142 aa)) enclose the SprT-like domain. Histidine 67 provides a ligand contact to Zn(2+). Glutamate 68 is a catalytic residue. Histidine 71 provides a ligand contact to Zn(2+).

This sequence belongs to the SprT family. Zn(2+) is required as a cofactor.

It localises to the cytoplasm. In Staphylococcus aureus (strain MRSA252), this protein is Protein SprT-like.